The primary structure comprises 165 residues: E3 ubiquitin ligase complex SCF subunit sconC (165 aa).

An interaction with the F-box domain of F-box proteins region spans residues 106 to 165; sequence ILAANYLDIKALLDVGCKTVANMIKGKSPEEIRKTFNIQNDFTPEEEDQIRRENEWAEDR.

Belongs to the SKP1 family. As to quaternary structure, component of the SCF (SKP1-CUL1-F-box protein) E3 ubiquitin ligase complexes.

It participates in protein modification; protein ubiquitination. Essential component of the SCF (SKP1-CUL1-F-box protein) E3 ubiquitin ligase complexes, which mediate the ubiquitination and subsequent proteasomal degradation of target proteins. Controls sulfur metabolite repression, probably by mediating the inactivation or degradation of the metR transcription factor. The chain is E3 ubiquitin ligase complex SCF subunit sconC (sconC) from Arthroderma otae (Microsporum canis).